The chain runs to 540 residues: UDP-N-acetylmuramyl-tripeptide synthetase (540 aa).

S33 lines the UDP-N-acetyl-alpha-D-muramoyl-L-alanyl-D-glutamate pocket. 114-120 contacts ATP; the sequence is GTEGKSS. UDP-N-acetyl-alpha-D-muramoyl-L-alanyl-D-glutamate is bound by residues 158–159, S185, and R195; that span reads TT. N6-carboxylysine is present on K227.

The protein belongs to the MurCDEF family. MurE subfamily. Post-translationally, carboxylation is probably crucial for Mg(2+) binding and, consequently, for the gamma-phosphate positioning of ATP.

The protein localises to the cytoplasm. It functions in the pathway cell wall biogenesis; peptidoglycan biosynthesis. Catalyzes the addition of an amino acid to the nucleotide precursor UDP-N-acetylmuramoyl-L-alanyl-D-glutamate (UMAG) in the biosynthesis of bacterial cell-wall peptidoglycan. The chain is UDP-N-acetylmuramyl-tripeptide synthetase from Treponema pallidum (strain Nichols).